Here is a 130-residue protein sequence, read N- to C-terminus: Protein ApaG (130 aa).

The ApaG domain occupies 3–127 (RAVTRNIEVQ…FSLDLPGTRR (125 aa)).

The polypeptide is Protein ApaG (Mesorhizobium japonicum (strain LMG 29417 / CECT 9101 / MAFF 303099) (Mesorhizobium loti (strain MAFF 303099))).